Reading from the N-terminus, the 667-residue chain is uncharacterized protein (667 aa).

This is an uncharacterized protein from Mycoplasma genitalium (strain ATCC 33530 / DSM 19775 / NCTC 10195 / G37) (Mycoplasmoides genitalium).